Reading from the N-terminus, the 279-residue chain is Large ribosomal subunit protein uL2 (279 aa).

Disordered regions lie at residues 32 to 58 and 223 to 279; these read SLLTPLPKKGGRNAHGRITARHQGGGH and GVAM…RKRG. 2 stretches are compositionally biased toward basic residues: residues 40–58 and 269–279; these read KGGRNAHGRITARHQGGGH and VRRRYATRKRG.

Belongs to the universal ribosomal protein uL2 family. As to quaternary structure, part of the 50S ribosomal subunit. Forms a bridge to the 30S subunit in the 70S ribosome.

Functionally, one of the primary rRNA binding proteins. Required for association of the 30S and 50S subunits to form the 70S ribosome, for tRNA binding and peptide bond formation. It has been suggested to have peptidyltransferase activity; this is somewhat controversial. Makes several contacts with the 16S rRNA in the 70S ribosome. This chain is Large ribosomal subunit protein uL2, found in Salinispora tropica (strain ATCC BAA-916 / DSM 44818 / JCM 13857 / NBRC 105044 / CNB-440).